We begin with the raw amino-acid sequence, 29 residues long: Cyclotide cter-L (29 aa).

Residues His-1–Asp-29 constitute a cross-link (cyclopeptide (His-Asp)). Cystine bridges form between Cys-4-Cys-20, Cys-8-Cys-22, and Cys-13-Cys-27.

Contains 3 disulfide bonds. Post-translationally, this is a cyclic peptide.

Functionally, probably participates in a plant defense mechanism. The chain is Cyclotide cter-L from Clitoria ternatea (Butterfly pea).